A 332-amino-acid polypeptide reads, in one-letter code: Ferredoxin--NADP reductase 2 (332 aa).

FAD-binding residues include Asp-33, Gln-41, Tyr-46, Val-86, Ile-121, Asp-282, and Ser-325.

Belongs to the ferredoxin--NADP reductase type 2 family. In terms of assembly, homodimer. FAD is required as a cofactor.

It carries out the reaction 2 reduced [2Fe-2S]-[ferredoxin] + NADP(+) + H(+) = 2 oxidized [2Fe-2S]-[ferredoxin] + NADPH. This Sulfolobus acidocaldarius (strain ATCC 33909 / DSM 639 / JCM 8929 / NBRC 15157 / NCIMB 11770) protein is Ferredoxin--NADP reductase 2.